A 155-amino-acid chain; its full sequence is Cyanate hydratase (155 aa).

Residues Arg92, Glu95, and Ser118 contribute to the active site.

This sequence belongs to the cyanase family.

It carries out the reaction cyanate + hydrogencarbonate + 3 H(+) = NH4(+) + 2 CO2. Catalyzes the reaction of cyanate with bicarbonate to produce ammonia and carbon dioxide. In Mycobacterium avium (strain 104), this protein is Cyanate hydratase.